We begin with the raw amino-acid sequence, 475 residues long: WASH complex subunit 1 (475 aa).

The segment at 1-54 (MTAVKTQHSLAGQVYAVPLIQPDLRREEAIQQVADALQYLQNISGDIFSRISQR) is required for WASH complex assembly. The tract at residues 1-167 (MTAVKTQHSL…EGLGGLPSNI (167 aa)) is WHD1. Lys-219 is covalently cross-linked (Glycyl lysine isopeptide (Lys-Gly) (interchain with G-Cter in ubiquitin)). The segment at 296–475 (EDGALLAPPP…GDEDEDDWES (180 aa)) is disordered. Pro residues predominate over residues 302 to 318 (APPPPPPPPPPPPPPAP). Residues 357–475 (QGAPKEVVDP…GDEDEDDWES (119 aa)) are VCA. A WH2 domain is found at 369–391 (GRATLLESIRQAGGIGKAKLRSV). Residues 390-406 (SVKERKLEKKKQKEQEQ) are compositionally biased toward basic and acidic residues. The span at 432-446 (SGKGPGTGTSEGPGG) shows a compositional bias: gly residues. Acidic residues predominate over residues 466 to 475 (GDEDEDDWES).

The protein belongs to the WASH1 family. As to quaternary structure, component of the WASH core complex also described as WASH regulatory complex SHRC composed of WASHC1, WASHC2, WASHC3, WASHC4 and WASHC5. The WASH core complex associates with the F-actin-capping protein dimer (formed by CAPZA1, CAPZA2 or CAPZA3 and CAPZB) in a transient or substoichiometric manner which was initially described as WASH complex. Interacts (via WHD1 region) with WASHC2; the interaction is direct. Interacts with BECN1; WASHC1 and AMBRA1 can competitively interact with BECN1. Interacts with BLOC1S2; may associate with the BLOC-1 complex. Interacts with tubulin gamma chain (TUBG1 or TUBG2). Interacts with TBC1D23. Post-translationally, ubiquitinated at Lys-219 via 'Lys-63'-linked ubiquitin chains by the TRIM27:MAGEL2 E3 ubiquitin ligase complex, leading to promote endosomal F-actin assembly.

The protein localises to the early endosome membrane. It is found in the recycling endosome membrane. Functionally, acts as a component of the WASH core complex that functions as a nucleation-promoting factor (NPF) at the surface of endosomes, where it recruits and activates the Arp2/3 complex to induce actin polymerization, playing a key role in the fission of tubules that serve as transport intermediates during endosome sorting. Regulates the trafficking of endosomal alpha5beta1 integrin to the plasma membrane and involved in invasive cell migration. In T-cells involved in endosome-to-membrane recycling of receptors including T-cell receptor (TCR), CD28 and ITGAL; proposed to be implicated in T-cell proliferation and effector function. In dendritic cells involved in endosome-to-membrane recycling of major histocompatibility complex (MHC) class II probably involving retromer and subsequently allowing antigen sampling, loading and presentation during T-cell activation. Involved in cytokinesis and following polar body extrusion during oocyte meiotic maturation. Involved in Arp2/3 complex-dependent actin assembly driving Salmonella typhimurium invasion independent of ruffling. Involved in the exocytosis of MMP14 leading to matrix remodeling during invasive migration and implicating late endosome-to-plasma membrane tubular connections and cooperation with the exocyst complex. Involved in negative regulation of autophagy independently from its role in endosomal sorting by inhibiting BECN1 ubiquitination to inactivate PIK3C3/Vps34 activity. The sequence is that of WASH complex subunit 1 from Rattus norvegicus (Rat).